Consider the following 313-residue polypeptide: Porphobilinogen deaminase (313 aa).

Position 242 is an S-(dipyrrolylmethanemethyl)cysteine (Cys242).

Belongs to the HMBS family. In terms of assembly, monomer. The cofactor is dipyrromethane.

It catalyses the reaction 4 porphobilinogen + H2O = hydroxymethylbilane + 4 NH4(+). It functions in the pathway porphyrin-containing compound metabolism; protoporphyrin-IX biosynthesis; coproporphyrinogen-III from 5-aminolevulinate: step 2/4. Its function is as follows. Tetrapolymerization of the monopyrrole PBG into the hydroxymethylbilane pre-uroporphyrinogen in several discrete steps. This Pseudomonas fluorescens (strain ATCC BAA-477 / NRRL B-23932 / Pf-5) protein is Porphobilinogen deaminase.